A 292-amino-acid polypeptide reads, in one-letter code: Lyso-ornithine lipid O-acyltransferase (292 aa).

A helical membrane pass occupies residues 11–31; that stretch reads GMLLVMVSLVLMPVQILCLWL. Residues 258–292 are disordered; sequence RLRGRSRSAAKGEPAPACSAAPDIPSDAQRSRLAP.

The protein belongs to the 1-acyl-sn-glycerol-3-phosphate acyltransferase family. OlsA subfamily.

The protein localises to the membrane. It carries out the reaction a lyso-ornithine lipid + a fatty acyl-[ACP] = an N(2)-[(3R)-3-(acyloxy)acyl]-L-ornithine lipid + holo-[ACP]. Its pathway is lipid metabolism. Catalyzes the second step in the formation of ornithine lipids, which are phosphorus-free membrane lipids. Uses acyl-acyl carrier protein (acyl-AcpP) as an acyl donor and converts lyso-ornithine lipid (LOL) into ornithine lipid (OL). This is Lyso-ornithine lipid O-acyltransferase from Rhizobium meliloti (strain 1021) (Ensifer meliloti).